The chain runs to 184 residues: ATP synthase subunit b (184 aa).

A helical transmembrane segment spans residues 24–44 (ILVVVVGFALLMFIVIKFIVP).

It belongs to the ATPase B chain family. In terms of assembly, F-type ATPases have 2 components, F(1) - the catalytic core - and F(0) - the membrane proton channel. F(1) has five subunits: alpha(3), beta(3), gamma(1), delta(1), epsilon(1). F(0) has three main subunits: a(1), b(2) and c(10-14). The alpha and beta chains form an alternating ring which encloses part of the gamma chain. F(1) is attached to F(0) by a central stalk formed by the gamma and epsilon chains, while a peripheral stalk is formed by the delta and b chains.

Its subcellular location is the cell membrane. Its function is as follows. F(1)F(0) ATP synthase produces ATP from ADP in the presence of a proton or sodium gradient. F-type ATPases consist of two structural domains, F(1) containing the extramembraneous catalytic core and F(0) containing the membrane proton channel, linked together by a central stalk and a peripheral stalk. During catalysis, ATP synthesis in the catalytic domain of F(1) is coupled via a rotary mechanism of the central stalk subunits to proton translocation. Component of the F(0) channel, it forms part of the peripheral stalk, linking F(1) to F(0). This chain is ATP synthase subunit b (atpF), found in Micrococcus luteus (strain ATCC 4698 / DSM 20030 / JCM 1464 / CCM 169 / CCUG 5858 / IAM 1056 / NBRC 3333 / NCIMB 9278 / NCTC 2665 / VKM Ac-2230) (Micrococcus lysodeikticus).